A 479-amino-acid chain; its full sequence is Sulfate adenylyltransferase subunit 1 (479 aa).

Residues 25-239 (KSLLRFLTCG…EVLETVDIQR (215 aa)) form the tr-type G domain. Residues 34–41 (GSVDDGKS) form a G1 region. 34–41 (GSVDDGKS) contributes to the GTP binding site. A G2 region spans residues 92-96 (GITID). Positions 113 to 116 (DTPG) are G3. GTP is bound by residues 113-117 (DTPGH) and 168-171 (NKMD). The segment at 168 to 171 (NKMD) is G4. The segment at 206–208 (SAL) is G5.

It belongs to the TRAFAC class translation factor GTPase superfamily. Classic translation factor GTPase family. CysN/NodQ subfamily. Heterodimer composed of CysD, the smaller subunit, and CysN.

The catalysed reaction is sulfate + ATP + H(+) = adenosine 5'-phosphosulfate + diphosphate. It participates in sulfur metabolism; hydrogen sulfide biosynthesis; sulfite from sulfate: step 1/3. Functionally, with CysD forms the ATP sulfurylase (ATPS) that catalyzes the adenylation of sulfate producing adenosine 5'-phosphosulfate (APS) and diphosphate, the first enzymatic step in sulfur assimilation pathway. APS synthesis involves the formation of a high-energy phosphoric-sulfuric acid anhydride bond driven by GTP hydrolysis by CysN coupled to ATP hydrolysis by CysD. In Salmonella choleraesuis (strain SC-B67), this protein is Sulfate adenylyltransferase subunit 1.